The primary structure comprises 234 residues: UPF0173 metal-dependent hydrolase R01310 (234 aa).

Belongs to the UPF0173 family.

This Rhizobium meliloti (strain 1021) (Ensifer meliloti) protein is UPF0173 metal-dependent hydrolase R01310.